The following is a 222-amino-acid chain: Eukaryotic translation initiation factor 3 subunit K (222 aa).

Positions tyrosine 46–lysine 208 constitute a PCI domain.

It belongs to the eIF-3 subunit K family. As to quaternary structure, component of the eukaryotic translation initiation factor 3 (eIF-3) complex. The eIF-3 complex interacts with pix.

It localises to the cytoplasm. In terms of biological role, component of the eukaryotic translation initiation factor 3 (eIF-3) complex, which is involved in protein synthesis of a specialized repertoire of mRNAs and, together with other initiation factors, stimulates binding of mRNA and methionyl-tRNAi to the 40S ribosome. The eIF-3 complex specifically targets and initiates translation of a subset of mRNAs involved in cell proliferation. This chain is Eukaryotic translation initiation factor 3 subunit K, found in Drosophila willistoni (Fruit fly).